The sequence spans 104 residues: Large ribosomal subunit protein bL21 (104 aa).

This sequence belongs to the bacterial ribosomal protein bL21 family. In terms of assembly, part of the 50S ribosomal subunit. Contacts protein L20.

In terms of biological role, this protein binds to 23S rRNA in the presence of protein L20. The protein is Large ribosomal subunit protein bL21 of Thermodesulfovibrio yellowstonii (strain ATCC 51303 / DSM 11347 / YP87).